A 190-amino-acid polypeptide reads, in one-letter code: Protein GrpE (190 aa).

Basic and acidic residues predominate over residues 1-10; that stretch reads MKKHVTEEQK. The tract at residues 1 to 42 is disordered; it reads MKKHVTEEQKTSAAPEAEQASPESSAAEAATPEERISRLEEQ. Residues 12-30 show a composition bias toward low complexity; sequence SAAPEAEQASPESSAAEAA. A compositionally biased stretch (basic and acidic residues) spans 32-42; sequence PEERISRLEEQ.

The protein belongs to the GrpE family. As to quaternary structure, homodimer.

The protein resides in the cytoplasm. In terms of biological role, participates actively in the response to hyperosmotic and heat shock by preventing the aggregation of stress-denatured proteins, in association with DnaK and GrpE. It is the nucleotide exchange factor for DnaK and may function as a thermosensor. Unfolded proteins bind initially to DnaJ; upon interaction with the DnaJ-bound protein, DnaK hydrolyzes its bound ATP, resulting in the formation of a stable complex. GrpE releases ADP from DnaK; ATP binding to DnaK triggers the release of the substrate protein, thus completing the reaction cycle. Several rounds of ATP-dependent interactions between DnaJ, DnaK and GrpE are required for fully efficient folding. The chain is Protein GrpE from Pelobacter propionicus (strain DSM 2379 / NBRC 103807 / OttBd1).